Reading from the N-terminus, the 83-residue chain is Small ribosomal subunit protein bS16 (83 aa).

This sequence belongs to the bacterial ribosomal protein bS16 family.

This is Small ribosomal subunit protein bS16 from Pseudoalteromonas atlantica (strain T6c / ATCC BAA-1087).